The following is a 332-amino-acid chain: Glycerol-3-phosphate dehydrogenase [NAD(P)+] (332 aa).

Residues W11, R30, and K108 each coordinate NADPH. The sn-glycerol 3-phosphate site is built by K108, G137, and S139. A141 contacts NADPH. The sn-glycerol 3-phosphate site is built by K192, D245, S255, R256, and N257. K192 functions as the Proton acceptor in the catalytic mechanism. R256 is an NADPH binding site. Residues V280 and E282 each contribute to the NADPH site.

It belongs to the NAD-dependent glycerol-3-phosphate dehydrogenase family.

It localises to the cytoplasm. The enzyme catalyses sn-glycerol 3-phosphate + NAD(+) = dihydroxyacetone phosphate + NADH + H(+). The catalysed reaction is sn-glycerol 3-phosphate + NADP(+) = dihydroxyacetone phosphate + NADPH + H(+). Its pathway is membrane lipid metabolism; glycerophospholipid metabolism. Functionally, catalyzes the reduction of the glycolytic intermediate dihydroxyacetone phosphate (DHAP) to sn-glycerol 3-phosphate (G3P), the key precursor for phospholipid synthesis. The sequence is that of Glycerol-3-phosphate dehydrogenase [NAD(P)+] from Burkholderia cenocepacia (strain ATCC BAA-245 / DSM 16553 / LMG 16656 / NCTC 13227 / J2315 / CF5610) (Burkholderia cepacia (strain J2315)).